A 101-amino-acid chain; its full sequence is Class II hydrophobin 5 (101 aa).

Positions 1–15 (MQLTALLALATLAIA) are cleaved as a signal peptide. 4 disulfides stabilise this stretch: cysteine 33–cysteine 83, cysteine 44–cysteine 74, cysteine 45–cysteine 57, and cysteine 84–cysteine 95.

It belongs to the cerato-ulmin hydrophobin family. As to quaternary structure, homodimer. Homodimers further self-assemble to form highly ordered films at water-air interfaces through intermolecular interactions.

The protein localises to the secreted. Its subcellular location is the cell wall. In terms of biological role, aerial growth, conidiation, and dispersal of filamentous fungi in the environment rely upon a capability of their secreting small amphipathic proteins called hydrophobins (HPBs) with low sequence identity. Class I can self-assemble into an outermost layer of rodlet bundles on aerial cell surfaces, conferring cellular hydrophobicity that supports fungal growth, development and dispersal; whereas Class II form highly ordered films at water-air interfaces through intermolecular interactions but contribute nothing to the rodlet structure. This chain is Class II hydrophobin 5, found in Trichoderma asperellum (strain ATCC 204424 / CBS 433.97 / NBRC 101777).